A 114-amino-acid chain; its full sequence is uncharacterized protein (114 aa).

Its function is as follows. May be associated with transposition functions of transposon Tn903. This is an uncharacterized protein from Escherichia coli.